Consider the following 148-residue polypeptide: 3-dehydroquinate dehydratase (148 aa).

The active-site Proton acceptor is tyrosine 23. The substrate site is built by asparagine 75, histidine 81, and aspartate 88. Histidine 101 (proton donor) is an active-site residue. Substrate is bound by residues 102–103 (LS) and arginine 112.

The protein belongs to the type-II 3-dehydroquinase family. In terms of assembly, homododecamer.

The catalysed reaction is 3-dehydroquinate = 3-dehydroshikimate + H2O. Its pathway is metabolic intermediate biosynthesis; chorismate biosynthesis; chorismate from D-erythrose 4-phosphate and phosphoenolpyruvate: step 3/7. Functionally, catalyzes a trans-dehydration via an enolate intermediate. This is 3-dehydroquinate dehydratase from Xylella fastidiosa (strain 9a5c).